Reading from the N-terminus, the 316-residue chain is HPr kinase/phosphorylase (316 aa).

Active-site residues include His-143 and Lys-164. 158 to 165 (GEAGSGKS) is a binding site for ATP. Residue Ser-165 participates in Mg(2+) binding. Catalysis depends on Asp-182, which acts as the Proton acceptor; for phosphorylation activity. Proton donor; for dephosphorylation activity. The tract at residues 206–215 (LEVRGLGVLN) is important for the catalytic mechanism of both phosphorylation and dephosphorylation. Glu-207 is a Mg(2+) binding site. Arg-251 is a catalytic residue. Residues 272–277 (PVMPGR) are important for the catalytic mechanism of dephosphorylation.

The protein belongs to the HPrK/P family. In terms of assembly, homohexamer. The cofactor is Mg(2+).

The catalysed reaction is [HPr protein]-L-serine + ATP = [HPr protein]-O-phospho-L-serine + ADP + H(+). It catalyses the reaction [HPr protein]-O-phospho-L-serine + phosphate + H(+) = [HPr protein]-L-serine + diphosphate. In terms of biological role, catalyzes the ATP- as well as the pyrophosphate-dependent phosphorylation of a specific serine residue in HPr, a phosphocarrier protein of the phosphoenolpyruvate-dependent sugar phosphotransferase system (PTS). HprK/P also catalyzes the pyrophosphate-producing, inorganic phosphate-dependent dephosphorylation (phosphorolysis) of seryl-phosphorylated HPr (P-Ser-HPr). The sequence is that of HPr kinase/phosphorylase from Stenotrophomonas maltophilia (strain R551-3).